Consider the following 61-residue polypeptide: UPF0434 protein PSPPH_1629 (61 aa).

Belongs to the UPF0434 family.

This Pseudomonas savastanoi pv. phaseolicola (strain 1448A / Race 6) (Pseudomonas syringae pv. phaseolicola (strain 1448A / Race 6)) protein is UPF0434 protein PSPPH_1629.